A 2625-amino-acid polypeptide reads, in one-letter code: Highly reducing polyketide synthase frbB (2625 aa).

The segment covering 1–10 (MRNIDEHMSE) has biased composition (basic and acidic residues). Residues 1-25 (MRNIDEHMSERATLQSSGGYGERDS) are disordered. The 423-residue stretch at 27 to 449 (VEPIAIIGMS…GTNAHVILDR (423 aa)) folds into the Ketosynthase family 3 (KS3) domain. Residues Cys-200, His-334, and His-375 each act as for beta-ketoacyl synthase activity in the active site. Residues 563–883 (YVFSGQGAQY…DAASTLLTTI (321 aa)) form a malonyl-CoA:ACP transacylase (MAT) domain region. The segment at 942-1080 (HELLGNMSTD…GRIRAVLDDS (139 aa)) is N-terminal hotdog fold. Residues 942 to 1252 (HELLGNMSTD…GMILAKLPGG (311 aa)) are dehydratase (DH) domain. Residues 942 to 1255 (HELLGNMSTD…LAKLPGGTSR (314 aa)) form the PKS/mFAS DH domain. Residue His-974 is the Proton acceptor; for dehydratase activity of the active site. A C-terminal hotdog fold region spans residues 1102–1255 (VRFVSPSAFY…LAKLPGGTSR (154 aa)). Catalysis depends on Asp-1167, which acts as the Proton donor; for dehydratase activity. Residues 1490–1673 (YHQIKAYIAE…GFVDTEPVFR (184 aa)) form a methyltransferase (CMet) domain region. The interval 1907-2220 (GLLETFHWKP…SGKHIGKVIL (314 aa)) is enoyl reductase (ER) domain. Residues 2261–2439 (AVYIVVGGLG…GYSINIGPVS (179 aa)) are ketoreductase (KR) domain. One can recognise a Carrier domain in the interval 2542–2619 (GAEAAVLTAI…HLARLAAEES (78 aa)). Ser-2579 carries the O-(pantetheine 4'-phosphoryl)serine modification.

It functions in the pathway antifungal biosynthesis. Functionally, highly reducing polyketide synthase; part of the gene cluster that mediates the biosynthesis of the antifungal antibiotic FR901469, an inhibitor of beta-1,3-glucansynthase, exerting antifungal activity against the pathogenes Candida albicans and Aspergillus fumigatus. FR901469 is a cyclic depsipeptide containing 12 amino acid residues and a fatty acid chain. The NRPS frbI contains 12 modules responsible for the formation of the depsipeptide backbone which is denoted as Acyl-Thr-Ala-Tyr-Val-4OHPro-Thr-Thr-3OHPro-threo3OHGln-Gly-Thr-Orn-OH (C71H116N14O23). The PKS frbB is probably involved in the production of the hydrocarbon chain, and the acyl-CoA ligase frbC might be involved in the transport of the chain to the peptide ptoduct of frbI. Because FR901469 contains 3 hydroxylated amino acid residues, the 3 oxygenases frbA, frbH, and frbJ might be participating in amino acid hydroxylation. As no thioesterase domains were detected in frbI or frbB, the thioesterases frbD and frbE may instead release and cyclize the products of the NRPS and PKS, respectively. This Dothideomycetidae sp. (strain 11243) (Fungal sp. (strain No.11243)) protein is Highly reducing polyketide synthase frbB.